The primary structure comprises 363 residues: UDP-3-O-acylglucosamine N-acyltransferase (363 aa).

Catalysis depends on H239, which acts as the Proton acceptor. Residues 342–363 (LSEMKKEVEKEKESSREKEETK) are disordered.

It belongs to the transferase hexapeptide repeat family. LpxD subfamily. In terms of assembly, homotrimer.

It catalyses the reaction a UDP-3-O-[(3R)-3-hydroxyacyl]-alpha-D-glucosamine + a (3R)-hydroxyacyl-[ACP] = a UDP-2-N,3-O-bis[(3R)-3-hydroxyacyl]-alpha-D-glucosamine + holo-[ACP] + H(+). It participates in bacterial outer membrane biogenesis; LPS lipid A biosynthesis. In terms of biological role, catalyzes the N-acylation of UDP-3-O-acylglucosamine using 3-hydroxyacyl-ACP as the acyl donor. Is involved in the biosynthesis of lipid A, a phosphorylated glycolipid that anchors the lipopolysaccharide to the outer membrane of the cell. In Syntrophus aciditrophicus (strain SB), this protein is UDP-3-O-acylglucosamine N-acyltransferase.